The chain runs to 187 residues: Large ribosomal subunit protein uL5 (187 aa).

Belongs to the universal ribosomal protein uL5 family. As to quaternary structure, part of the 50S ribosomal subunit; part of the 5S rRNA/L5/L18/L25 subcomplex. Contacts the 5S rRNA and the P site tRNA. Forms a bridge to the 30S subunit in the 70S ribosome.

In terms of biological role, this is one of the proteins that bind and probably mediate the attachment of the 5S RNA into the large ribosomal subunit, where it forms part of the central protuberance. In the 70S ribosome it contacts protein S13 of the 30S subunit (bridge B1b), connecting the 2 subunits; this bridge is implicated in subunit movement. Contacts the P site tRNA; the 5S rRNA and some of its associated proteins might help stabilize positioning of ribosome-bound tRNAs. This chain is Large ribosomal subunit protein uL5, found in Roseobacter denitrificans (strain ATCC 33942 / OCh 114) (Erythrobacter sp. (strain OCh 114)).